A 223-amino-acid polypeptide reads, in one-letter code: Endonuclease V (223 aa).

Mg(2+)-binding residues include Asp35 and Asp103.

Belongs to the endonuclease V family. The cofactor is Mg(2+).

It is found in the cytoplasm. It carries out the reaction Endonucleolytic cleavage at apurinic or apyrimidinic sites to products with a 5'-phosphate.. DNA repair enzyme involved in the repair of deaminated bases. Selectively cleaves double-stranded DNA at the second phosphodiester bond 3' to a deoxyinosine leaving behind the intact lesion on the nicked DNA. The sequence is that of Endonuclease V from Salmonella schwarzengrund (strain CVM19633).